Consider the following 64-residue polypeptide: Large ribosomal subunit protein uL30 (64 aa).

The protein belongs to the universal ribosomal protein uL30 family. In terms of assembly, part of the 50S ribosomal subunit.

This is Large ribosomal subunit protein uL30 from Rhodopseudomonas palustris (strain BisB18).